The sequence spans 421 residues: uncharacterized protein (421 aa).

Coiled coils occupy residues 126–182 (YART…IQKI) and 328–397 (YQVE…RLTL).

This is an uncharacterized protein from Treponema pallidum (strain Nichols).